The primary structure comprises 453 residues: Gamma-glutamylpolyamine synthetase GlnA2 (453 aa).

In terms of domain architecture, GS beta-grasp spans 15-100; sequence RDIRFVRLWF…MFCDILMPDG (86 aa). The 347-residue stretch at 107-453 folds into the GS catalytic domain; sequence PRYVLKRALA…FELRKSLPVL (347 aa). Glu-130 and Glu-132 together coordinate Mg(2+). Glu-182 is an ATP binding site. Glu-187 and Glu-194 together coordinate Mg(2+). Gly-239 is an L-glutamate binding site. Position 243 (His-243) interacts with Mg(2+). 245-247 contributes to the ATP binding site; it reads HLS. L-glutamate contacts are provided by Arg-296, Glu-310, and Arg-322. The ATP site is built by Arg-322 and Arg-327. Glu-342 contributes to the Mg(2+) binding site. An L-glutamate-binding site is contributed by Arg-344.

Belongs to the glutamine synthetase family. Requires Mg(2+) as cofactor.

It carries out the reaction putrescine + L-glutamate + ATP = gamma-L-glutamylputrescine + ADP + phosphate + H(+). It catalyses the reaction spermine + L-glutamate + ATP = gamma-L-glutamylspermine + ADP + phosphate + H(+). The enzyme catalyses spermidine + L-glutamate + ATP = gamma-L-glutamylspermidine + ADP + phosphate + H(+). The catalysed reaction is cadaverine + L-glutamate + ATP = gamma-L-glutamylcadaverine + ADP + phosphate + H(+). The protein operates within amine and polyamine degradation; putrescine degradation. It functions in the pathway amine and polyamine degradation; spermidine degradation. Its pathway is amine and polyamine degradation; spermine degradation. No effect on activity with glutamine synthetase (GS) inhibitor methionine sulfoximine (MSO). Functionally, involved in the catabolism of polyamines. Catalyzes the ATP-dependent gamma-glutamylation of polyamines. Substrates include putrescine, cadaverine, spermidine and spermine, with a preference for short-chain polyamine putrescine. No complementation of the L-glutamine auxotrophy of an E.coli glnA mutant. Together with GlnA3, enables survival of S.coelicolor under exposure to high local environmental polyamine concentrations, which is toxic to the cells. The protein is Gamma-glutamylpolyamine synthetase GlnA2 of Streptomyces coelicolor (strain ATCC BAA-471 / A3(2) / M145).